A 133-amino-acid chain; its full sequence is Snaclec A9 (133 aa).

3 cysteine pairs are disulfide-bonded: cysteine 4–cysteine 15, cysteine 32–cysteine 131, and cysteine 106–cysteine 123. The C-type lectin domain maps to 11 to 132 (YEGHCYKVFN…CGQPYRFTCE (122 aa)).

Belongs to the snaclec family. In terms of assembly, heterodimer; disulfide-linked. As to expression, expressed by the venom gland.

It is found in the secreted. Interferes with one step of hemostasis (modulation of platelet aggregation, or coagulation cascade, for example). The chain is Snaclec A9 from Macrovipera lebetinus (Levantine viper).